Consider the following 437-residue polypeptide: MGQGVSSGQDKKKKKGSNQKPKYEPPVQSKFGRKKRKGGPATAEKLPNIYPSTRCKLKLLRMERIKDHLLLEEEFVSNSEILKPFEKKQEEEKKQLEEIRGNPLSIGTLEEIIDDDHAIVTSPTMPDYYVSILSFVDKELLEPGCSVLLHHKTMSIVGVLQDDADPMVSVMKMDKSPTESYSDIGGLESQIQEIKESVELPLTHPELYEEMGIKPPKGVILYGAPGTGKTLLAKAVANQTSATFLRIVGSELIQKYLGDGPRLCRQIFKVAGENAPSIVFIDEIDAIGTKRYDSNSGGEREIQRTMLELLNQLDGFDDRGDVKVIMATNKIETLDPALIRPGRIDRKILFENPDLSTKKKILGIHTSKMNLSEDVNLETLVTTKDDLSGADIQAMCTEAGLLALRERRMQVTAEDFKQAKERVMKNKVEENLEGLYL.

The tract at residues 1-47 (MGQGVSSGQDKKKKKGSNQKPKYEPPVQSKFGRKKRKGGPATAEKLP) is disordered. The N-myristoyl glycine moiety is linked to residue G2. 223 to 230 (GAPGTGKT) provides a ligand contact to ATP. Residues K234, K255, and K290 each participate in a glycyl lysine isopeptide (Lys-Gly) (interchain with G-Cter in ubiquitin) cross-link.

The protein belongs to the AAA ATPase family.

It localises to the cytoplasm. It is found in the nucleus. Its function is as follows. The 26S proteasome is involved in the ATP-dependent degradation of ubiquitinated proteins. The regulatory (or ATPase) complex confers ATP dependency and substrate specificity to the 26S complex. Has ATPase activity. This Saccharomyces cerevisiae (strain ATCC 204508 / S288c) (Baker's yeast) protein is 26S proteasome regulatory subunit 4 homolog (RPT2).